A 479-amino-acid polypeptide reads, in one-letter code: Altronate oxidoreductase (479 aa).

18–29 (IIQFGEGNFLRA) provides a ligand contact to NAD(+).

This sequence belongs to the mannitol dehydrogenase family. UxaB subfamily.

The enzyme catalyses D-altronate + NAD(+) = keto-D-tagaturonate + NADH + H(+). It participates in carbohydrate metabolism; pentose and glucuronate interconversion. This is Altronate oxidoreductase from Phocaeicola vulgatus (strain ATCC 8482 / DSM 1447 / JCM 5826 / CCUG 4940 / NBRC 14291 / NCTC 11154) (Bacteroides vulgatus).